Reading from the N-terminus, the 121-residue chain is MSITNEQILDAVAEMSVMQVVELIEAMEEKFGVTAAAAVVAGGAAAEAAEEQTEFDVILTAIGGNKVSVIKAVRGATGLGLKEAKGLVDSAPAALKEGVDKAEAEGLKAQLEEAGATVEIK.

This sequence belongs to the bacterial ribosomal protein bL12 family. Homodimer. Part of the ribosomal stalk of the 50S ribosomal subunit. Forms a multimeric L10(L12)X complex, where L10 forms an elongated spine to which 2 to 4 L12 dimers bind in a sequential fashion. Binds GTP-bound translation factors.

Functionally, forms part of the ribosomal stalk which helps the ribosome interact with GTP-bound translation factors. Is thus essential for accurate translation. This chain is Large ribosomal subunit protein bL12, found in Aliivibrio salmonicida (strain LFI1238) (Vibrio salmonicida (strain LFI1238)).